Reading from the N-terminus, the 207-residue chain is Cytidylyl-2-hydroxypropylphosphonate hydrolase (207 aa).

CDP-binding residues include Trp-68, Arg-74, Gln-76, and Ser-77. A divalent metal cation is bound by residues Asn-109, Asp-125, Glu-127, and Asp-129. Lys-142 is a CDP binding site. The Proton donor role is filled by Lys-142. Asp-143 is a binding site for a divalent metal cation.

Belongs to the FomD family. Mn(2+) is required as a cofactor. Co(2+) serves as cofactor.

It catalyses the reaction cytidine 5'-({hydroxy[(S)-2-hydroxypropyl]phosphonoyl}phosphate) + H2O = (S)-2-hydroxypropylphosphonate + CMP + H(+). The protein operates within antibiotic biosynthesis; fosfomycin biosynthesis. With respect to regulation, hydrolysis of (S)-HPP-CMP is inhibited by CDP. Functionally, involved in fosfomycin biosynthesis. Catalyzes the hydrolysis of cytidylyl (S)-2-hydroxypropylphosphonate ((S)-HPP-CMP) to give (S)-2-hydroxypropylphosphonate ((S)-HPP) and CMP. Can also hydrolyze (R)-HPP-CMP and cytidylyl 2-hydroxyethylphosphonate (HEP-CMP), which is a biosynthetic intermediate before C-methylation, but the catalytic efficiency is much higher with (S)-HPP-CMP. This chain is Cytidylyl-2-hydroxypropylphosphonate hydrolase, found in Streptomyces fradiae (Streptomyces roseoflavus).